Consider the following 354-residue polypeptide: Rhodopsin (354 aa).

Residues 1–36 (MNGTEGPYFYVPMVNTTGIVRSPYEYPQYYLVSPAA) are Extracellular-facing. N-linked (GlcNAc...) asparagine glycans are attached at residues N2 and N15. Residues 37–61 (YACLGAYMFFLILVGFPVNFLTLYV) form a helical membrane-spanning segment. At 62–73 (TIEHKKLRTPLN) the chain is on the cytoplasmic side. The chain crosses the membrane as a helical span at residues 74-96 (YILLNLAVADLFMVFGGFTTTIY). The Extracellular portion of the chain corresponds to 97–110 (TSMHGYFVLGRLGC). An intrachain disulfide couples C110 to C187. A helical membrane pass occupies residues 111–133 (NLEGYFATLGGEIGLWSLVVLAV). A 'Ionic lock' involved in activated form stabilization motif is present at residues 134 to 136 (ERW). The Cytoplasmic portion of the chain corresponds to 134 to 152 (ERWLVVCKPISNFRFTENH). The helical transmembrane segment at 153-173 (AIMGLVFTWIMANACAAPPLL) threads the bilayer. Over 174 to 202 (GWSRYIPEGMQCSCGVDYYTRAEGFNNES) the chain is Extracellular. The chain crosses the membrane as a helical span at residues 203 to 224 (FVIYMFICHFCIPLVVVFFCYG). The Cytoplasmic segment spans residues 225-252 (RLLCAVKEAAAAQQESETTQRAEREVTR). The helical transmembrane segment at 253–274 (MVVILVIGFLVCWTPYASVAWY) threads the bilayer. Residues 275–286 (IFSNQGSEFGPL) are Extracellular-facing. Residues 287–308 (FMTIPAFFAKSSSIYNPMIYIC) traverse the membrane as a helical segment. K296 bears the N6-(retinylidene)lysine mark. The Cytoplasmic segment spans residues 309–354 (MNKQFRHCMITTLCCGKNPFEEEEGASTTASKTEASSVSSSSVSPA). S-palmitoyl cysteine attachment occurs at residues C322 and C323. The tract at residues 333–354 (GASTTASKTEASSVSSSSVSPA) is disordered. Low complexity predominate over residues 334–354 (ASTTASKTEASSVSSSSVSPA).

It belongs to the G-protein coupled receptor 1 family. Opsin subfamily. In terms of processing, phosphorylated on some or all of the serine and threonine residues present in the C-terminal region. Contains one covalently linked retinal chromophore.

Its subcellular location is the membrane. The protein resides in the cell projection. It localises to the cilium. It is found in the photoreceptor outer segment. Its function is as follows. Photoreceptor required for image-forming vision at low light intensity. While most salt water fish species use retinal as chromophore, most freshwater fish use 3-dehydroretinal, or a mixture of retinal and 3-dehydroretinal. Light-induced isomerization of 11-cis to all-trans retinal triggers a conformational change that activates signaling via G-proteins. Subsequent receptor phosphorylation mediates displacement of the bound G-protein alpha subunit by arrestin and terminates signaling. This Gambusia affinis (Western mosquitofish) protein is Rhodopsin (rho).